The following is a 208-amino-acid chain: Ribonuclease HII (208 aa).

Positions 11–203 (GPVAGVDEAG…VAAAHEQWLK (193 aa)) constitute an RNase H type-2 domain. A divalent metal cation-binding residues include Asp-17, Glu-18, and Asp-112.

This sequence belongs to the RNase HII family. Mn(2+) serves as cofactor. Mg(2+) is required as a cofactor.

It localises to the cytoplasm. The enzyme catalyses Endonucleolytic cleavage to 5'-phosphomonoester.. Functionally, endonuclease that specifically degrades the RNA of RNA-DNA hybrids. This Corynebacterium jeikeium (strain K411) protein is Ribonuclease HII.